The chain runs to 271 residues: Tryptophan synthase alpha chain (271 aa).

Active-site proton acceptor residues include E49 and D60.

This sequence belongs to the TrpA family. As to quaternary structure, tetramer of two alpha and two beta chains.

The catalysed reaction is (1S,2R)-1-C-(indol-3-yl)glycerol 3-phosphate + L-serine = D-glyceraldehyde 3-phosphate + L-tryptophan + H2O. It participates in amino-acid biosynthesis; L-tryptophan biosynthesis; L-tryptophan from chorismate: step 5/5. Its function is as follows. The alpha subunit is responsible for the aldol cleavage of indoleglycerol phosphate to indole and glyceraldehyde 3-phosphate. This Rhizorhabdus wittichii (strain DSM 6014 / CCUG 31198 / JCM 15750 / NBRC 105917 / EY 4224 / RW1) (Sphingomonas wittichii) protein is Tryptophan synthase alpha chain.